We begin with the raw amino-acid sequence, 465 residues long: Ribulose bisphosphate carboxylase large chain (465 aa).

Lys4 carries the N6,N6,N6-trimethyllysine modification. Positions 113 and 163 each coordinate substrate. The active-site Proton acceptor is Lys165. Lys167 is a substrate binding site. Mg(2+) contacts are provided by Lys191, Asp193, and Glu194. Position 191 is an N6-carboxylysine (Lys191). The active-site Proton acceptor is the His284. Substrate-binding residues include Arg285, His317, and Ser369.

Belongs to the RuBisCO large chain family. Type I subfamily. As to quaternary structure, heterohexadecamer of 8 large chains and 8 small chains; disulfide-linked. The disulfide link is formed within the large subunit homodimers. It depends on Mg(2+) as a cofactor. In terms of processing, the disulfide bond which can form in the large chain dimeric partners within the hexadecamer appears to be associated with oxidative stress and protein turnover.

It is found in the plastid. The protein localises to the chloroplast. The catalysed reaction is 2 (2R)-3-phosphoglycerate + 2 H(+) = D-ribulose 1,5-bisphosphate + CO2 + H2O. It catalyses the reaction D-ribulose 1,5-bisphosphate + O2 = 2-phosphoglycolate + (2R)-3-phosphoglycerate + 2 H(+). Its function is as follows. RuBisCO catalyzes two reactions: the carboxylation of D-ribulose 1,5-bisphosphate, the primary event in carbon dioxide fixation, as well as the oxidative fragmentation of the pentose substrate in the photorespiration process. Both reactions occur simultaneously and in competition at the same active site. In Morus rubra (Red mulberry), this protein is Ribulose bisphosphate carboxylase large chain.